A 407-amino-acid chain; its full sequence is Probable beta-1,3-galactosyltransferase 4 (407 aa).

The chain crosses the membrane as a helical; Signal-anchor for type II membrane protein span at residues 23–39; sequence WTLFLCIGFFCAGILFS.

This sequence belongs to the glycosyltransferase 31 family. The cofactor is Mn(2+).

The protein localises to the golgi apparatus membrane. Its pathway is protein modification; protein glycosylation. Functionally, beta-1,3-galactosyltransferase that transfers galactose from UDP-galactose to substrates with a terminal glycosyl residue. The protein is Probable beta-1,3-galactosyltransferase 4 (B3GALT4) of Arabidopsis thaliana (Mouse-ear cress).